The sequence spans 312 residues: Methionyl-tRNA formyltransferase (312 aa).

113-116 (SILP) contributes to the (6S)-5,6,7,8-tetrahydrofolate binding site.

It belongs to the Fmt family.

The enzyme catalyses L-methionyl-tRNA(fMet) + (6R)-10-formyltetrahydrofolate = N-formyl-L-methionyl-tRNA(fMet) + (6S)-5,6,7,8-tetrahydrofolate + H(+). Its function is as follows. Attaches a formyl group to the free amino group of methionyl-tRNA(fMet). The formyl group appears to play a dual role in the initiator identity of N-formylmethionyl-tRNA by promoting its recognition by IF2 and preventing the misappropriation of this tRNA by the elongation apparatus. The chain is Methionyl-tRNA formyltransferase from Hydrogenovibrio crunogenus (strain DSM 25203 / XCL-2) (Thiomicrospira crunogena).